The sequence spans 513 residues: ATP synthase subunit alpha (513 aa).

Residue 169-176 (GDRQTGKT) coordinates ATP.

This sequence belongs to the ATPase alpha/beta chains family. In terms of assembly, F-type ATPases have 2 components, CF(1) - the catalytic core - and CF(0) - the membrane proton channel. CF(1) has five subunits: alpha(3), beta(3), gamma(1), delta(1), epsilon(1). CF(0) has three main subunits: a(1), b(2) and c(9-12). The alpha and beta chains form an alternating ring which encloses part of the gamma chain. CF(1) is attached to CF(0) by a central stalk formed by the gamma and epsilon chains, while a peripheral stalk is formed by the delta and b chains.

It is found in the cell inner membrane. It catalyses the reaction ATP + H2O + 4 H(+)(in) = ADP + phosphate + 5 H(+)(out). Produces ATP from ADP in the presence of a proton gradient across the membrane. The alpha chain is a regulatory subunit. The chain is ATP synthase subunit alpha from Glaesserella parasuis serovar 5 (strain SH0165) (Haemophilus parasuis).